The following is a 185-amino-acid chain: MIQAGDFRKGTTFEMDGDVWQIIDFQHVKPGKGAAFVRTKIRSVMTGSNRDMTFNPNEKYEEARIETREMQYLYNDGTLYYFMDPDSYEQLPIDKASVEEAILYIKENDMATIKFFKGKAFQVSPPNFVELEITQTEPGIKGNTATGATKPATVETGATVNVPLFVNEGDKIKIDTRTGEYLSRV.

This sequence belongs to the elongation factor P family.

It is found in the cytoplasm. The protein operates within protein biosynthesis; polypeptide chain elongation. Its function is as follows. Involved in peptide bond synthesis. Stimulates efficient translation and peptide-bond synthesis on native or reconstituted 70S ribosomes in vitro. Probably functions indirectly by altering the affinity of the ribosome for aminoacyl-tRNA, thus increasing their reactivity as acceptors for peptidyl transferase. The polypeptide is Elongation factor P (Finegoldia magna (strain ATCC 29328 / DSM 20472 / WAL 2508) (Peptostreptococcus magnus)).